The following is a 148-amino-acid chain: Large ribosomal subunit protein bL9 (148 aa).

The protein belongs to the bacterial ribosomal protein bL9 family.

Functionally, binds to the 23S rRNA. The sequence is that of Large ribosomal subunit protein bL9 from Methylobacillus flagellatus (strain ATCC 51484 / DSM 6875 / VKM B-1610 / KT).